The sequence spans 648 residues: Transcription initiation factor TFIID subunit 5 (648 aa).

Positions 1-13 are enriched in low complexity; the sequence is MDSENSSSHSISS. Positions 1–21 are disordered; the sequence is MDSENSSSHSISSPQMFQNTH. Residues 35–67 form the LisH domain; sequence MNNESLQMIIGYLRRNGLTETEELLTREAGPVL. WD repeat units follow at residues 317–358, 392–431, 433–472, 475–514, 517–556, and 560–599; these read NAPI…KKLR, GHGG…NAVI, RTPA…PLRI, DPYG…RVRI, GHKA…LVAA, and EQAG…GTVL.

Belongs to the WD repeat TAF5 family. As to quaternary structure, component of the TFIID basal transcription factor complex, composed of TATA-box-binding protein tbp-1, and a number of TBP-associated factors (TAFs).

Its subcellular location is the nucleus. In terms of biological role, the TFIID basal transcription factor complex plays a major role in the initiation of RNA polymerase II (Pol II)-dependent transcription. TFIID recognizes and binds promoters via its subunit tbp-1, a TATA-box-binding protein, and promotes assembly of the pre-initiation complex (PIC). The TFIID complex consists of tbp-1 and TBP-associated factors (TAFs), including taf-5. Essential for early embryonic development, but not required for transcription of some genes; probably acts via activating transcription initiation by RNA Pol II, as part of the TFIID complex. In Caenorhabditis elegans, this protein is Transcription initiation factor TFIID subunit 5.